Consider the following 334-residue polypeptide: MVGREKELSIHFVPGDCRLVEEEVNIPNRRVLITGATGLLGRAVYKEFQQNNWHAVGCGFRRARPKFEQVNLLDSNAVHHIIYDFQPHVIVHCAAERRPDVVENHPDAASQLNVDASGNLAKEAAAIGAFLIYISSDYVFDGTNPPYREEDIPNPLNLYGKTKLEGEKAVLENNLGAAVLRIPVLYGEVERLEESAVTIMFDKVQFSNKSANMDHWQQRFPTHVKDVATVCRQLAEKRMLDPSIKGTFHWSGNEQMTKYEMACAIADAFNLPSSHLRPITDSPVVGAQRPRNAQLDCSRLETLGIGQRTPFRIGIKESLWPFLIDKRWRQTVFH.

NADP(+) contacts are provided by residues 37–40 (TGLL), 60–62 (FRR), 71–72 (NL), C93, R97, Y159, and L185. A Phosphothreonine modification is found at T309. The segment at 319-334 (LWPFLIDKRWRQTVFH) is required for interaction with MAT2A.

This sequence belongs to the dTDP-4-dehydrorhamnose reductase family. MAT2B subfamily. As to quaternary structure, heterotrimer; composed of a catalytic MAT2A homodimer that binds one regulatory MAT2B chain. Heterohexamer; composed of a central, catalytic MAT2A homotetramer flanked on either side by a regulatory MAT2B chain. NADP binding increases the affinity for MAT2A.

It participates in amino-acid biosynthesis; S-adenosyl-L-methionine biosynthesis; S-adenosyl-L-methionine from L-methionine: step 1/1. Functionally, regulatory subunit of S-adenosylmethionine synthetase 2, an enzyme that catalyzes the formation of S-adenosylmethionine from methionine and ATP. Regulates MAT2A catalytic activity by changing its kinetic properties, increasing its affinity for L-methionine. Can bind NADP (in vitro). In Bos taurus (Bovine), this protein is Methionine adenosyltransferase 2 subunit beta (MAT2B).